We begin with the raw amino-acid sequence, 200 residues long: FMN-dependent NADH:quinone oxidoreductase (200 aa).

Residues serine 10, 96–99, and 140–143 each bind FMN; these read MYNF and SRGG.

Belongs to the azoreductase type 1 family. Homodimer. Requires FMN as cofactor.

It catalyses the reaction 2 a quinone + NADH + H(+) = 2 a 1,4-benzosemiquinone + NAD(+). The enzyme catalyses N,N-dimethyl-1,4-phenylenediamine + anthranilate + 2 NAD(+) = 2-(4-dimethylaminophenyl)diazenylbenzoate + 2 NADH + 2 H(+). Quinone reductase that provides resistance to thiol-specific stress caused by electrophilic quinones. Its function is as follows. Also exhibits azoreductase activity. Catalyzes the reductive cleavage of the azo bond in aromatic azo compounds to the corresponding amines. The protein is FMN-dependent NADH:quinone oxidoreductase of Photorhabdus laumondii subsp. laumondii (strain DSM 15139 / CIP 105565 / TT01) (Photorhabdus luminescens subsp. laumondii).